Consider the following 739-residue polypeptide: Nuclear pore complex protein NUP62 (739 aa).

19 tandem repeats follow at residues 6 to 7 (FG), 17 to 18 (FG), 50 to 51 (FG), 52 to 53 (FG), 68 to 69 (FG), 70 to 71 (FG), 78 to 79 (FG), 80 to 81 (FG), 91 to 92 (FG), 93 to 94 (FG), 108 to 109 (FG), 110 to 111 (FG), 124 to 125 (FG), 141 to 142 (FG), 159 to 160 (FG), 174 to 175 (FG), 186 to 187 (FG), 207 to 208 (FG), and 221 to 222 (FG). The tract at residues 6-450 (FGQSNSVGGF…AATFSTTGFG (445 aa)) is 26 X 2 AA repeats of F-G. The segment at 18 to 67 (GSSSATNSSSASSTTSPLSFSFNQSSNPSSTGFGFGSSVSSTPASSTTPS) is disordered. Positions 79 to 218 (GFGSSASSST…ASSSAATSTS (140 aa)) are enriched in low complexity. Residues 79–245 (GFGSSASSST…VASSAPGSSS (167 aa)) form a disordered region. Residues 232-245 (PSFSVASSAPGSSS) show a composition bias toward low complexity. 5 repeat units span residues 248-249 (FG), 271-272 (FG), 280-281 (FG), 308-309 (FG), and 366-367 (FG). Disordered regions lie at residues 281–329 (GSSS…ASPF), 341–366 (TASS…SFSF), and 399–418 (TTTS…SAPA). A run of 2 repeats spans residues 426-427 (FG) and 449-450 (FG). Residues 471–533 (KTSTPASSSQ…AVAPVAGSPK (63 aa)) are disordered. Low complexity predominate over residues 472-519 (TSTPASSSQPQTTSPAFSFSLPSSTSTTAPATSSATTTQTTLVVPSSS). Residues 584–674 (RLEIEVAKVV…IRSIIQSVNA (91 aa)) are a coiled coil.

The protein belongs to the nucleoporin NSP1/NUP62 family. In terms of assembly, part of the nuclear pore complex (NPC). The NPC has an eight-fold symmetrical structure comprising a central transport channel and two rings, the cytoplasmic and nuclear rings, to which eight filaments are attached. The cytoplasmic filaments have loose ends, while the nuclear filaments are joined in a distal ring, forming a nuclear basket. NPCs are highly dynamic in configuration and composition, and can be devided in 3 subcomplexes, the NUP62 subcomplex, the NUP107-160 subcomplex and the NUP93 subcomplex, containing approximately 30 different nucleoporin proteins. Interacts with NUP58 and the importin KPNB1.

Its subcellular location is the nucleus envelope. It is found in the nucleus. The protein resides in the nuclear pore complex. The protein is Nuclear pore complex protein NUP62 of Arabidopsis thaliana (Mouse-ear cress).